Consider the following 600-residue polypeptide: L-galactono-1,4-lactone dehydrogenase, mitochondrial (600 aa).

The transit peptide at 1 to 25 (MLRSLLLRRSNARSLRPPFPPLRTL) directs the protein to the mitochondrion. A disordered region spans residues 16-51 (RPPFPPLRTLCTSGQTLTPAPPPPPPPPPPISSSAS). Residues 26 to 91 (CTSGQTLTPA…AKHKKAQIFR (66 aa)) constitute a propeptide, removed in mature form. The segment covering 34 to 46 (PAPPPPPPPPPPI) has biased composition (pro residues). The helical transmembrane segment at 58–74 (YAGYAALALFSGAATYF) threads the bilayer. Residues 108–279 (THEVQTRNFN…AEVTLQCVER (172 aa)) form the FAD-binding PCMH-type domain.

FAD is required as a cofactor.

It is found in the mitochondrion membrane. It carries out the reaction L-galactono-1,4-lactone + 4 Fe(III)-[cytochrome c] = L-dehydroascorbate + 4 Fe(II)-[cytochrome c] + 5 H(+). Its pathway is cofactor biosynthesis; L-ascorbate biosynthesis. With respect to regulation, inhibited by sulfhydryl-modifying agents such as N-ethylmaleimide, monoiodoacetic acid and p-hydroxymercuribenzoic acid. No inhibition by riboflavin and lycorine. In terms of biological role, involved in the biosynthesis of ascorbic acid. Uses L-galactono-1,4-lactone as substrate, but not L-gulono-1,4-lactone, D-galactono-1,4-lactone, D-gulono-1,4-lactone, D-erythronic-1,4-lactone, D-xylonic-1,4-lactone, L-mannono-1,4-lactone, D-galactonic acid, D-glucuronic acid or D-gluconic acid. FAD, NAD, NADP and O(2) cannot act as electron acceptor. This chain is L-galactono-1,4-lactone dehydrogenase, mitochondrial, found in Brassica oleracea (Wild cabbage).